The following is a 181-amino-acid chain: ATP-dependent protease subunit HslV (181 aa).

Thr-2 is an active-site residue. Positions 157, 160, and 163 each coordinate Na(+).

This sequence belongs to the peptidase T1B family. HslV subfamily. In terms of assembly, a double ring-shaped homohexamer of HslV is capped on each side by a ring-shaped HslU homohexamer. The assembly of the HslU/HslV complex is dependent on binding of ATP.

It is found in the cytoplasm. It carries out the reaction ATP-dependent cleavage of peptide bonds with broad specificity.. Allosterically activated by HslU binding. In terms of biological role, protease subunit of a proteasome-like degradation complex believed to be a general protein degrading machinery. This chain is ATP-dependent protease subunit HslV, found in Hahella chejuensis (strain KCTC 2396).